The sequence spans 199 residues: Charged multivesicular body protein 1b (199 aa).

Coiled coils occupy residues 10–30 (NLKFAAKELQRNSKKCDKEEK) and 178–199 (TSVASAEQDELSQRLAKLRDQV). A disordered region spans residues 167–199 (ELPQGQTGSVGTSVASAEQDELSQRLAKLRDQV). Over residues 170 to 182 (QGQTGSVGTSVAS) the composition is skewed to polar residues. Residues 186 to 196 (DELSQRLAKLR) carry the MIT-interacting motif motif.

Belongs to the SNF7 family. Probable peripherally associated component of the endosomal sorting required for transport complex III (ESCRT-III).

The protein localises to the cytoplasm. The protein resides in the cytosol. It is found in the endosome. It localises to the late endosome membrane. Functionally, probable peripherally associated component of the endosomal sorting required for transport complex III (ESCRT-III) which is involved in multivesicular bodies (MVBs) formation and sorting of endosomal cargo proteins into MVBs. MVBs contain intraluminal vesicles (ILVs) that are generated by invagination and scission from the limiting membrane of the endosome and mostly are delivered to lysosomes enabling degradation of membrane proteins, such as stimulated growth factor receptors, lysosomal enzymes and lipids. The sequence is that of Charged multivesicular body protein 1b (chmp1b) from Danio rerio (Zebrafish).